The sequence spans 302 residues: Sulfate adenylyltransferase subunit 2 (302 aa).

The protein belongs to the PAPS reductase family. CysD subfamily. Heterodimer composed of CysD, the smaller subunit, and CysN.

The catalysed reaction is sulfate + ATP + H(+) = adenosine 5'-phosphosulfate + diphosphate. It functions in the pathway sulfur metabolism; hydrogen sulfide biosynthesis; sulfite from sulfate: step 1/3. Its function is as follows. With CysN forms the ATP sulfurylase (ATPS) that catalyzes the adenylation of sulfate producing adenosine 5'-phosphosulfate (APS) and diphosphate, the first enzymatic step in sulfur assimilation pathway. APS synthesis involves the formation of a high-energy phosphoric-sulfuric acid anhydride bond driven by GTP hydrolysis by CysN coupled to ATP hydrolysis by CysD. In Escherichia coli O157:H7 (strain EC4115 / EHEC), this protein is Sulfate adenylyltransferase subunit 2.